The chain runs to 258 residues: Acetylglutamate kinase (258 aa).

Substrate is bound by residues G41–G42, R63, and N156.

The protein belongs to the acetylglutamate kinase family. ArgB subfamily.

Its subcellular location is the cytoplasm. The enzyme catalyses N-acetyl-L-glutamate + ATP = N-acetyl-L-glutamyl 5-phosphate + ADP. Its pathway is amino-acid biosynthesis; L-arginine biosynthesis; N(2)-acetyl-L-ornithine from L-glutamate: step 2/4. Catalyzes the ATP-dependent phosphorylation of N-acetyl-L-glutamate. The sequence is that of Acetylglutamate kinase from Geobacillus thermodenitrificans (strain NG80-2).